A 244-amino-acid polypeptide reads, in one-letter code: Cobalt transport protein CbiM (244 aa).

The signal sequence occupies residues 1–28 (MKLLKNKKVTFVALLAILAVLSTQSVSA). 6 helical membrane-spanning segments follow: residues 36-56 (LPLFWCIFWFAVFLPFFVVGL), 71-91 (TMLALSGAFIFILSSLKIPSV), 108-128 (FGPSVISVLGTICLLFQALLL), 135-155 (TLGANAFSMAVVGPFVGYFVY), 166-186 (PVSIFICAVIADLATYATTSI), and 208-228 (GVFLTTQIPIAIVEGLLTVVL).

Belongs to the CbiM family. In terms of assembly, forms an energy-coupling factor (ECF) transporter complex composed of an ATP-binding protein (A component, CbiO), a transmembrane protein (T component, CbiQ) and 2 possible substrate-capture proteins (S components, CbiM and CbiN) of unknown stoichimetry.

Its subcellular location is the cell membrane. Its pathway is cofactor biosynthesis; adenosylcobalamin biosynthesis. Part of the energy-coupling factor (ECF) transporter complex CbiMNOQ involved in cobalt import. The sequence is that of Cobalt transport protein CbiM from Streptococcus sanguinis (strain SK36).